We begin with the raw amino-acid sequence, 533 residues long: MDTGLCAPLRGLSGLLLLLCALPWAEGGKVLVFPMEGSHWLSMRDVVRELHARGHQAVVLAPEVTVHMKGEDFFTLQTYAFPYTKEEYQREILGNAKKGFEPQHFVKTFFETMASIKKFFDLYANSCAALLHNKTLIQQLNSSSFDVVLTDPVFPCGALLAKYLQIPAVFFLRSVPCGIDYEATQCPKPSSYIPNLLTMLSDHMTFLQRVKNMLYPLTLKYICHLSITPYESLASELLQREMSLVEVLSHASVWLFRGDFVFDYPRPIMPNMVFIGGINCVIKKPLSQEFEAYVNASGEHGIVVFSLGSMVSEIPEKKAMEIAEALGRIPQTLLWRYTGTRPSNLAKNTILVKWLPQNDLLGHPKARAFITHSGSHGIYEGICNGVPMVMMPLFGDQMDNAKRMETRGAGVTLNVLEMTADDLENALKTVINNKSYKENIMRLSSLHKDRPIEPLDLAVFWVEYVMRHKGAPHLRPAAHDLTWYQYHSLDVIGFLLAIVLTVVFIVYKSCAYGCRKCFGGKGRVKKSHKSKTH.

The first 27 residues, 1–27 (MDTGLCAPLRGLSGLLLLLCALPWAEG), serve as a signal peptide directing secretion. N-linked (GlcNAc...) asparagine glycans are attached at residues asparagine 133, asparagine 141, asparagine 295, and asparagine 433. The helical transmembrane segment at 491–507 (VIGFLLAIVLTVVFIVY) threads the bilayer.

This sequence belongs to the UDP-glycosyltransferase family.

It is found in the microsome. The protein resides in the endoplasmic reticulum membrane. It catalyses the reaction glucuronate acceptor + UDP-alpha-D-glucuronate = acceptor beta-D-glucuronoside + UDP + H(+). Functionally, UDPGT is of major importance in the conjugation and subsequent elimination of potentially toxic xenobiotics and endogenous compounds. This Rattus norvegicus (Rat) protein is UDP-glucuronosyltransferase 1-2 (Ugt1a2).